Here is a 428-residue protein sequence, read N- to C-terminus: 3-phosphoshikimate 1-carboxyvinyltransferase (428 aa).

3-phosphoshikimate contacts are provided by lysine 22, serine 23, and arginine 27. Residue lysine 22 participates in phosphoenolpyruvate binding. Phosphoenolpyruvate is bound by residues glycine 94 and arginine 122. Positions 169, 170, 171, 197, 315, and 342 each coordinate 3-phosphoshikimate. Glutamine 171 provides a ligand contact to phosphoenolpyruvate. Aspartate 315 acts as the Proton acceptor in catalysis. Phosphoenolpyruvate-binding residues include arginine 346, arginine 389, and lysine 414.

It belongs to the EPSP synthase family. As to quaternary structure, monomer.

It is found in the cytoplasm. The catalysed reaction is 3-phosphoshikimate + phosphoenolpyruvate = 5-O-(1-carboxyvinyl)-3-phosphoshikimate + phosphate. It participates in metabolic intermediate biosynthesis; chorismate biosynthesis; chorismate from D-erythrose 4-phosphate and phosphoenolpyruvate: step 6/7. Its function is as follows. Catalyzes the transfer of the enolpyruvyl moiety of phosphoenolpyruvate (PEP) to the 5-hydroxyl of shikimate-3-phosphate (S3P) to produce enolpyruvyl shikimate-3-phosphate and inorganic phosphate. This chain is 3-phosphoshikimate 1-carboxyvinyltransferase, found in Cellvibrio japonicus (strain Ueda107) (Pseudomonas fluorescens subsp. cellulosa).